Here is an 826-residue protein sequence, read N- to C-terminus: Lysine-specific histone demethylase 1B (826 aa).

The span at 1 to 11 (MAASRGRSKKR) shows a compositional bias: basic residues. The disordered stretch occupies residues 1-46 (MAASRGRSKKRSNLELSPDNLPLRSSGRQAKKKAVEIPDEDEDGSS). 2 positions are modified to phosphoserine: Ser-17 and Ser-26. The Zn(2+) site is built by Cys-53, Cys-58, Cys-65, Cys-73, His-84, His-90, Cys-92, Cys-95, Cys-142, Cys-147, Cys-169, and Cys-185. Residues 133–193 (DQQLPYWVQC…HCSFPEDLRV (61 aa)) form a CW-type zinc finger. Position 253 is a phosphoserine (Ser-253). Positions 279–298 (YQPNECGKALCVRPDVMELD) are GLYR1-binding. The region spanning 281 to 379 (PNECGKALCV…TGVLTVAAGQ (99 aa)) is the SWIRM domain. Residue 389 to 445 (KSVLVVGAGPAGLAAARQLHNFGMKVTVLEAKDRIGGRVWDDKSFKGVVVGRGPQIV) coordinates FAD. Histone H3-binding stretches follow at residues 444–473 (IVNG…RCDL), 493–504 (FNALLDVVSEWR), and 544–578 (FHLS…AGDH). Residues 570–572 (FFA) form a GLYR1-binding region. Residues Val-604, Glu-799, and 807-809 (QTV) each bind FAD. Residues 802–818 (NRHFPQTVTGAYLSGVR) are GLYR1-binding.

This sequence belongs to the flavin monoamine oxidase family. In terms of assembly, interacts with its cofactor GLYR1 at nucleosomes; this interaction stimulates H3K4me1 and H3K4me2 demethylation. In contrast to KDM1A, does not form a complex with RCOR1/CoREST. Possible accessory component of the polycomb repressive deubiquitinase (PR-DUB) complex, at least composed of BAP1, one of ASXL1, ASXL2 or (probably) ASXL3 and one of MBD5 or MBD6. The PR-DUB core associates with a number of accessory proteins, including FOXK1, FOXK2, KDM1B, HCFC1 and OGT; KDM1B specifically associates with ASXL2 PR-DUB complexes. FAD serves as cofactor. Requires Zn(2+) as cofactor. Expressed in growing oocytes and in intestinal gland.

The protein resides in the nucleus. Its subcellular location is the chromosome. The catalysed reaction is N(6),N(6)-dimethyl-L-lysyl(4)-[histone H3] + 2 A + 2 H2O = L-lysyl(4)-[histone H3] + 2 formaldehyde + 2 AH2. The enzyme catalyses N(6)-methyl-L-lysyl(4)-[histone H3] + A + H2O = L-lysyl(4)-[histone H3] + formaldehyde + AH2. Its activity is regulated as follows. Inhibited by tranylcypromine, but not by pargyline, deprenyl or rasagiline. Histone H3K4me1 and H3K4me2 demethylase activity is inhibited by DNA, this inhibition is released in complex with GLYR1. In terms of biological role, histone demethylase that demethylates 'Lys-4' of histone H3, a specific tag for epigenetic transcriptional activation, thereby acting as a corepressor. Required for de novo DNA methylation of a subset of imprinted genes during oogenesis. Acts by oxidizing the substrate by FAD to generate the corresponding imine that is subsequently hydrolyzed. Demethylates both mono- and di-methylated 'Lys-4' of histone H3. Has no effect on tri-methylated 'Lys-4', mono-, di- or tri-methylated 'Lys-9', mono-, di- or tri-methylated 'Lys-27', mono-, di- or tri-methylated 'Lys-36' of histone H3, or on mono-, di- or tri-methylated 'Lys-20' of histone H4. Histone demethylase that demethylates 'Lys-4' of histone H3, a specific tag for epigenetic transcriptional activation, thereby acting as a corepressor. Required for de novo DNA methylation of a subset of imprinted genes during oogenesis. Acts by oxidizing the substrate by FAD to generate the corresponding imine that is subsequently hydrolyzed. Demethylates both mono- and di-methylated 'Lys-4' of histone H3. Has no effect on tri-methylated 'Lys-4', mono-, di- or tri-methylated 'Lys-9', mono-, di- or tri-methylated 'Lys-27', mono-, di- or tri-methylated 'Lys-36' of histone H3, or on mono-, di- or tri-methylated 'Lys-20' of histone H4. Alone, it is unable to demethylate H3K4me on nucleosomes and requires the presence of GLYR1 to achieve such activity, they form a multifunctional enzyme complex that modifies transcribed chromatin and facilitates Pol II transcription through nucleosomes. The sequence is that of Lysine-specific histone demethylase 1B from Mus musculus (Mouse).